A 467-amino-acid polypeptide reads, in one-letter code: Argininosuccinate lyase (467 aa).

This sequence belongs to the lyase 1 family. Argininosuccinate lyase subfamily.

Its subcellular location is the cytoplasm. The enzyme catalyses 2-(N(omega)-L-arginino)succinate = fumarate + L-arginine. The protein operates within amino-acid biosynthesis; L-arginine biosynthesis; L-arginine from L-ornithine and carbamoyl phosphate: step 3/3. This Rhizobium etli (strain CIAT 652) protein is Argininosuccinate lyase.